The sequence spans 257 residues: UPF0246 protein lpl1317 (257 aa).

Belongs to the UPF0246 family.

This Legionella pneumophila (strain Lens) protein is UPF0246 protein lpl1317.